Reading from the N-terminus, the 305-residue chain is MLRIIFLGTGGSLPTRNRNPSAVIVNLKGELLLFDCGEGTQQQMMRAKTGMMSLSSIFVSHFHADHFLGIPGLIQTMSFLGRKEPLTIYGPEGTKEFTEVFKVLGYCNLKYEVRGVELSPGDIVEGKNYVVRALKTEHSTPSLGYSLIENPRPGRFNREKAVELGVLPGPLFAKLQKGNPVEVNGKLVKPEEVVGAPRPGRTVVYSGDTRPCEAVLEASRDADVLIHDGSFADEMAGWAEESMHSTAGEVASLAKEAGVRQLVLTHISSRYTDDVGPILNDSRKVFENVIVAEDLMELEVPYRPD.

Residues H61, H63, D65, H66, H138, D208, and H266 each contribute to the Zn(2+) site. D65 serves as the catalytic Proton acceptor.

Belongs to the RNase Z family. In terms of assembly, homodimer. The cofactor is Zn(2+).

It carries out the reaction Endonucleolytic cleavage of RNA, removing extra 3' nucleotides from tRNA precursor, generating 3' termini of tRNAs. A 3'-hydroxy group is left at the tRNA terminus and a 5'-phosphoryl group is left at the trailer molecule.. Functionally, zinc phosphodiesterase, which displays some tRNA 3'-processing endonuclease activity. Probably involved in tRNA maturation, by removing a 3'-trailer from precursor tRNA. This is Ribonuclease Z from Methanosarcina mazei (strain ATCC BAA-159 / DSM 3647 / Goe1 / Go1 / JCM 11833 / OCM 88) (Methanosarcina frisia).